Consider the following 400-residue polypeptide: Enoyl-[acyl-carrier-protein] reductase [NADH] (400 aa).

NAD(+) contacts are provided by residues 74 to 75, 111 to 112, and 139 to 140; these read FE, DA, and VA. Tyr225 provides a ligand contact to substrate. Tyr235 serves as the catalytic Proton donor. Residues Lys244 and 273–275 contribute to the NAD(+) site; that span reads VVT.

Belongs to the TER reductase family. As to quaternary structure, monomer.

It carries out the reaction a 2,3-saturated acyl-[ACP] + NAD(+) = a (2E)-enoyl-[ACP] + NADH + H(+). The protein operates within lipid metabolism; fatty acid biosynthesis. In terms of biological role, involved in the final reduction of the elongation cycle of fatty acid synthesis (FAS II). Catalyzes the reduction of a carbon-carbon double bond in an enoyl moiety that is covalently linked to an acyl carrier protein (ACP). This is Enoyl-[acyl-carrier-protein] reductase [NADH] from Psychromonas ingrahamii (strain DSM 17664 / CCUG 51855 / 37).